Reading from the N-terminus, the 370-residue chain is Protein FAM110B (370 aa).

Disordered regions lie at residues 127–151 (SSEGSSSGSGHKHSSRNWPPHRSEA) and 237–256 (KSPEADPVEPACGVSRRPSL). S238 and S301 each carry phosphoserine. The interval 317 to 337 (DCEQSQDSNSDLRNDDSANDR) is disordered. Basic and acidic residues predominate over residues 326–335 (SDLRNDDSAN).

The protein belongs to the FAM110 family. Detected in thyroid, spleen and testis, and at lower levels in stomach, spinal cord, lymph node, trachea, adrenal gland, prostate, ovary and intestine.

It is found in the cytoplasm. Its subcellular location is the cytoskeleton. It localises to the microtubule organizing center. The protein resides in the centrosome. Its function is as follows. May be involved in tumor progression. This Homo sapiens (Human) protein is Protein FAM110B (FAM110B).